Here is a 398-residue protein sequence, read N- to C-terminus: WW domain-binding protein 4 (398 aa).

Residues 11–42 (KFCDYCKCWIADNRPSIDFHERGKNHKENVAK) form a Matrin-type zinc finger. Disordered stretches follow at residues 84–182 (GIKP…SVWV), 200–274 (VSTW…KLSP), 300–350 (LASK…PPVL), and 379–398 (KKRE…LDDQ). A compositionally biased stretch (polar residues) spans 92–103 (PSSTLNKTQSIT). The segment covering 112 to 125 (KKEKKEKKEKKKKT) has biased composition (basic residues). Over residues 126-139 (REGTSESPKTEPKE) the composition is skewed to basic and acidic residues. WW domains are found at residues 134–167 (KTEP…KPKG) and 175–208 (SHTG…KPDG). Residues 169–178 (QGNSKTSHTG) are compositionally biased toward polar residues. Positions 221–232 (KHSEEADSRASE) are enriched in basic and acidic residues. Residues 233–242 (SDSEQEDSES) show a composition bias toward acidic residues. Positions 305–316 (ASSDESKTDTYG) are enriched in basic and acidic residues. The span at 324–333 (EEEEEPDEKV) shows a compositional bias: acidic residues.

In terms of assembly, component of the spliceosome B complex. Associated with U2 snRNPs. Binds splicing factors SNRPB, SNRPC and SF1.

Its subcellular location is the nucleus. It is found in the nucleus speckle. Functionally, involved in pre-mRNA splicing as a component of the spliceosome. May play a role in cross-intron bridging of U1 and U2 snRNPs in the mammalian A complex. This is WW domain-binding protein 4 (WBP4) from Gallus gallus (Chicken).